The primary structure comprises 94 residues: Large ribosomal subunit protein uL23 (94 aa).

Belongs to the universal ribosomal protein uL23 family. As to quaternary structure, part of the 50S ribosomal subunit. Contacts protein L29, and trigger factor when it is bound to the ribosome.

One of the early assembly proteins it binds 23S rRNA. One of the proteins that surrounds the polypeptide exit tunnel on the outside of the ribosome. Forms the main docking site for trigger factor binding to the ribosome. The chain is Large ribosomal subunit protein uL23 from Latilactobacillus sakei subsp. sakei (strain 23K) (Lactobacillus sakei subsp. sakei).